The following is a 77-amino-acid chain: Defensin-like protein 1 (77 aa).

Residues 1–30 (MKLSVRFISAALLLFMVFIATGMGPVTVEA) form the signal peptide. Cystine bridges form between C33/C77, C44/C64, C50/C71, and C54/C73.

It belongs to the DEFL family. As to expression, expressed in the whole plant except roots.

Its subcellular location is the secreted. Confers broad-spectrum resistance to pathogens. In Arabidopsis thaliana (Mouse-ear cress), this protein is Defensin-like protein 1 (PDF2.3).